Here is a 131-residue protein sequence, read N- to C-terminus: Phosphoribosyl-AMP cyclohydrolase (131 aa).

D78 serves as a coordination point for Mg(2+). Position 79 (C79) interacts with Zn(2+). Mg(2+)-binding residues include D80 and D82. The Zn(2+) site is built by C96 and C103.

The protein belongs to the PRA-CH family. As to quaternary structure, homodimer. Requires Mg(2+) as cofactor. The cofactor is Zn(2+).

Its subcellular location is the cytoplasm. It carries out the reaction 1-(5-phospho-beta-D-ribosyl)-5'-AMP + H2O = 1-(5-phospho-beta-D-ribosyl)-5-[(5-phospho-beta-D-ribosylamino)methylideneamino]imidazole-4-carboxamide. It participates in amino-acid biosynthesis; L-histidine biosynthesis; L-histidine from 5-phospho-alpha-D-ribose 1-diphosphate: step 3/9. Functionally, catalyzes the hydrolysis of the adenine ring of phosphoribosyl-AMP. The sequence is that of Phosphoribosyl-AMP cyclohydrolase from Neisseria meningitidis serogroup A / serotype 4A (strain DSM 15465 / Z2491).